The sequence spans 250 residues: Hydroxyacylglutathione hydrolase (250 aa).

7 residues coordinate Zn(2+): His-52, His-54, Asp-56, His-57, His-107, Asp-128, and His-166.

It belongs to the metallo-beta-lactamase superfamily. Glyoxalase II family. Monomer. Zn(2+) serves as cofactor.

It catalyses the reaction an S-(2-hydroxyacyl)glutathione + H2O = a 2-hydroxy carboxylate + glutathione + H(+). It functions in the pathway secondary metabolite metabolism; methylglyoxal degradation; (R)-lactate from methylglyoxal: step 2/2. In terms of biological role, thiolesterase that catalyzes the hydrolysis of S-D-lactoyl-glutathione to form glutathione and D-lactic acid. The chain is Hydroxyacylglutathione hydrolase from Neisseria meningitidis serogroup A / serotype 4A (strain DSM 15465 / Z2491).